A 216-amino-acid chain; its full sequence is Thymidylate kinase (216 aa).

10–17 contributes to the ATP binding site; it reads GPDGAGKS.

The protein belongs to the thymidylate kinase family.

It carries out the reaction dTMP + ATP = dTDP + ADP. Functionally, phosphorylation of dTMP to form dTDP in both de novo and salvage pathways of dTTP synthesis. This is Thymidylate kinase from Lactobacillus acidophilus (strain ATCC 700396 / NCK56 / N2 / NCFM).